The sequence spans 284 residues: Pantothenate synthetase (284 aa).

Position 34–41 (34–41) interacts with ATP; sequence MGALHAGH. Catalysis depends on His-41, which acts as the Proton donor. Residue Gln-65 participates in (R)-pantoate binding. Residue Gln-65 participates in beta-alanine binding. 151 to 154 contributes to the ATP binding site; sequence GEKD. Gln-157 provides a ligand contact to (R)-pantoate. Residues Leu-180 and 188–191 each bind ATP; that span reads MSSR.

This sequence belongs to the pantothenate synthetase family. Homodimer.

It localises to the cytoplasm. It carries out the reaction (R)-pantoate + beta-alanine + ATP = (R)-pantothenate + AMP + diphosphate + H(+). It participates in cofactor biosynthesis; (R)-pantothenate biosynthesis; (R)-pantothenate from (R)-pantoate and beta-alanine: step 1/1. Its function is as follows. Catalyzes the condensation of pantoate with beta-alanine in an ATP-dependent reaction via a pantoyl-adenylate intermediate. This chain is Pantothenate synthetase, found in Paramagnetospirillum magneticum (strain ATCC 700264 / AMB-1) (Magnetospirillum magneticum).